Consider the following 81-residue polypeptide: Acyl carrier protein (81 aa).

The region spanning 1-79 (MDVAAMQVKI…DIFDYLAKNK (79 aa)) is the Carrier domain. Position 39 is an O-(pantetheine 4'-phosphoryl)serine (Ser-39).

The protein belongs to the acyl carrier protein (ACP) family. Post-translationally, 4'-phosphopantetheine is transferred from CoA to a specific serine of apo-ACP by AcpS. This modification is essential for activity because fatty acids are bound in thioester linkage to the sulfhydryl of the prosthetic group.

The protein localises to the cytoplasm. It functions in the pathway lipid metabolism; fatty acid biosynthesis. Its function is as follows. Carrier of the growing fatty acid chain in fatty acid biosynthesis. The chain is Acyl carrier protein from Syntrophobacter fumaroxidans (strain DSM 10017 / MPOB).